The following is a 69-amino-acid chain: uncharacterized protein (69 aa).

Residues 23-46 (AENEGNRKENRRQMQSRNERGCNV) are disordered. The span at 26–44 (EGNRKENRRQMQSRNERGC) shows a compositional bias: basic and acidic residues.

This is an uncharacterized protein from Homo sapiens (Human).